The sequence spans 423 residues: MTLLIKNGRLVDPKSNRDEVLDILIENDKIVKIGLNLSVENAEIVDARGLVVAPGLIDVHVHFREPGQTHKETIHSGAKSAAAGGFTRVVMMANTKPILSTPKVLTETLEIADKEDIKIDAVGSITQDFDGEHLTDFDELIKAGAIGFSDDGIPLTDAGVLRKALQKAKLTDSLISIHEEDPNLIGTLGVNDGEVAHKCGFTGAPTVSEYSMMARDSMIAYETGARLHIQHLSAGESVEVVRFAKNLGAKITAEVTPQHFSITEQMIFEQGTNAKLNPPLRSTTDIGKIIEGLKDGTIDVIATDHAPHTREEKNVSLDKAPSGMIGLETSLQLGLTNLVAKGHLTLSELLTKMTVNPAKLYNFDAGYLAENGPADLVIFDAENDYQVGETFDSKATNSPFIKQKVQGQVKYTICDGKIVYQAK.

Positions 60 and 62 each coordinate Zn(2+). Residues 62–64 (HFR) and N94 contribute to the substrate site. Zn(2+) is bound by residues D151, H178, and H231. N277 provides a ligand contact to substrate. D304 is a binding site for Zn(2+). The active site involves D304. Substrate is bound at residue H308.

Belongs to the metallo-dependent hydrolases superfamily. DHOase family. Class I DHOase subfamily. It depends on Zn(2+) as a cofactor.

It carries out the reaction (S)-dihydroorotate + H2O = N-carbamoyl-L-aspartate + H(+). It participates in pyrimidine metabolism; UMP biosynthesis via de novo pathway; (S)-dihydroorotate from bicarbonate: step 3/3. Catalyzes the reversible cyclization of carbamoyl aspartate to dihydroorotate. The sequence is that of Dihydroorotase from Lactococcus lactis subsp. lactis (strain IL1403) (Streptococcus lactis).